The following is a 112-amino-acid chain: Ribosomal processing cysteine protease Prp (112 aa).

The active-site Proton donor is the H22. C34 acts as the Nucleophile in catalysis.

This sequence belongs to the Prp family. Homodimer.

An essential cysteine protease that cleaves the N-terminus from ribosomal protein bL27. The polypeptide is Ribosomal processing cysteine protease Prp (Bacillus subtilis (strain 168)).